The primary structure comprises 400 residues: Plasminogen activator inhibitor 1 (400 aa).

The N-terminal stretch at 1 to 21 (MQMSTVCLALGLALVFGEASA) is a signal peptide. N-linked (GlcNAc...) asparagine glycans are attached at residues Asn230, Asn286, and Asn350.

The protein belongs to the serpin family. In terms of assembly, forms a heterodimer with TMPRSS7. Interacts with VTN. Binds LRP1B; binding is followed by internalization and degradation. Interacts with PPP1CB. In complex with PLAU/uPA, interacts with PLAUR/uPAR. Interacts with SORL1 and LRP1, either alone or in complex with PLAU; these interactions are abolished in the presence of LRPAP1/RAP. The ternary complex composed of PLAUR-PLAU-PAI1 also interacts with SORL1. Interacts with PLAT/tPA. Also interacts with SORL1, when complexed to PLAT/tPA.

It is found in the secreted. In terms of biological role, serine protease inhibitor. Inhibits TMPRSS7. Is a primary inhibitor of tissue-type plasminogen activator (PLAT) and urokinase-type plasminogen activator (PLAU). As PLAT inhibitor, it is required for fibrinolysis down-regulation and is responsible for the controlled degradation of blood clots. As PLAU inhibitor, it is involved in the regulation of cell adhesion and spreading. Acts as a regulator of cell migration, independently of its role as protease inhibitor. It is required for stimulation of keratinocyte migration during cutaneous injury repair. It is involved in cellular and replicative senescence. Plays a role in alveolar type 2 cells senescence in the lung. Is involved in the regulation of cementogenic differentiation of periodontal ligament stem cells, and regulates odontoblast differentiation and dentin formation during odontogenesis. This Neovison vison (American mink) protein is Plasminogen activator inhibitor 1 (SERPINE1).